Reading from the N-terminus, the 1429-residue chain is Autophagy-related protein 11 (1429 aa).

4 coiled-coil regions span residues 540–579 (GDDDLLQSLQEDKGKLENKLKTAESRVRRLEDLLHRQSQA), 616–808 (EGID…LDDH), 842–985 (TLVE…HMNS), and 1106–1135 (RRIKEVEHMARKWQKEARSYRERAHILQKD). The tract at residues 574–622 (HRQSQASRPGNLFQPQGSQQRERVNSASSVRSSRFDDRRRSSEGIDPLM) is disordered. Over residues 575 to 592 (RQSQASRPGNLFQPQGSQ) the composition is skewed to polar residues. Over residues 606-616 (SRFDDRRRSSE) the composition is skewed to basic and acidic residues. Disordered stretches follow at residues 1205-1224 (SKSLQPSSETESINDEENDN) and 1333-1405 (RAHN…PTRR). Polar residues-rich tracts occupy residues 1206–1215 (KSLQPSSETE) and 1333–1362 (RAHNADTPSGTSPTQGGHLTSTNASLGQKN). Basic and acidic residues predominate over residues 1384-1398 (KADEQPRSVVQREDS).

Belongs to the ATG11 family. In terms of assembly, homodimer and potential homooligomers. Interacts with ATG1 kinase and the ATG19 and ATG34 cargo protein transporters. Interacts with ATG9, ATG17 and ATG20.

Its subcellular location is the preautophagosomal structure membrane. It is found in the vacuole membrane. Functionally, involved in cytoplasm to vacuole transport (Cvt), pexophagy, mitophagy and nucleophagy. Recruits mitochondria for their selective degradation via autophagy (mitophagy) during starvation, through its interaction with ATG32. Works as scaffold proteins that recruit ATG proteins to the pre-autophagosome (PAS), the site of vesicle/autophagosome formation. Required for ATG9 anterograde transport from the mitochondria to the PAS. Also recruits the ATG19-prAPE1 complex to the PAS. Required for the Cvt vesicles completion. Autophagy is required for proper vegetative growth, asexual/sexual reproduction, and full virulence. Autophagy is particularly involved in the biosynthesis of deoxynivalenol (DON), an important virulence determinant. This is Autophagy-related protein 11 from Gibberella zeae (strain ATCC MYA-4620 / CBS 123657 / FGSC 9075 / NRRL 31084 / PH-1) (Wheat head blight fungus).